We begin with the raw amino-acid sequence, 424 residues long: 3-phosphoshikimate 1-carboxyvinyltransferase (424 aa).

3 residues coordinate 3-phosphoshikimate: K21, S22, and R26. K21 contributes to the phosphoenolpyruvate binding site. Residues G91 and R119 each coordinate phosphoenolpyruvate. Residues S164, Q166, D310, and K337 each contribute to the 3-phosphoshikimate site. Phosphoenolpyruvate is bound at residue Q166. The Proton acceptor role is filled by D310. Phosphoenolpyruvate contacts are provided by R341 and R382.

The protein belongs to the EPSP synthase family. In terms of assembly, monomer.

It localises to the cytoplasm. It catalyses the reaction 3-phosphoshikimate + phosphoenolpyruvate = 5-O-(1-carboxyvinyl)-3-phosphoshikimate + phosphate. The protein operates within metabolic intermediate biosynthesis; chorismate biosynthesis; chorismate from D-erythrose 4-phosphate and phosphoenolpyruvate: step 6/7. Its function is as follows. Catalyzes the transfer of the enolpyruvyl moiety of phosphoenolpyruvate (PEP) to the 5-hydroxyl of shikimate-3-phosphate (S3P) to produce enolpyruvyl shikimate-3-phosphate and inorganic phosphate. In Campylobacter hominis (strain ATCC BAA-381 / DSM 21671 / CCUG 45161 / LMG 19568 / NCTC 13146 / CH001A), this protein is 3-phosphoshikimate 1-carboxyvinyltransferase.